The following is a 420-amino-acid chain: Protein disulfide isomerase Creld1 (420 aa).

Positions 1–29 (MAPQPLRGLVPFLLWCLSLFLSLPGPVWL) are cleaved as a signal peptide. The Extracellular portion of the chain corresponds to 30 to 362 (QPSPPPHSAP…GFFAEMTEDE (333 aa)). A CXXC motif is present at residues 46 to 49 (CHTC). 4 cysteine pairs are disulfide-bonded: Cys46/Cys49, Cys155/Cys169, Cys163/Cys181, and Cys183/Cys192. Residues 153–193 (LPCPGGTERPCGGYGQCEGEGTRGGSGHCDCQAGYGGEACG) form the EGF-like 1 domain. A glycan (N-linked (GlcNAc...) asparagine) is linked at Asn205. 2 FU repeats span residues 208-255 (HLVC…EQAT) and 268-315 (SYEC…VVCP). Positions 278–281 (CLGC) match the CXXC motif. 4 disulfide bridges follow: Cys278/Cys281, Cys309/Cys321, Cys314/Cys330, and Cys332/Cys343. Residues 305–342 (DVDECETVVCPGENEQCENTEGSYRCVCAEGFRQEDGI) enclose the EGF-like 2; calcium-binding domain. A helical transmembrane segment spans residues 363-383 (MVVLQQMFFGVIICALATLAA). Position 384 (Lys384) is a topological domain, cytoplasmic. Residues 385–405 (GDLVFTAIFIGAVAAMTGYWL) traverse the membrane as a helical segment. The Extracellular segment spans residues 406 to 420 (SERSDRVLEGFIKGR).

It belongs to the CRELD family.

Its subcellular location is the membrane. It carries out the reaction Catalyzes the rearrangement of -S-S- bonds in proteins.. Its function is as follows. Protein disulfide isomerase. Promotes the localization of acetylcholine receptors (AChRs) to the plasma membrane. The sequence is that of Protein disulfide isomerase Creld1 (Creld1) from Rattus norvegicus (Rat).